The chain runs to 381 residues: Lipid-A-disaccharide synthase (381 aa).

The protein belongs to the LpxB family.

The catalysed reaction is a lipid X + a UDP-2-N,3-O-bis[(3R)-3-hydroxyacyl]-alpha-D-glucosamine = a lipid A disaccharide + UDP + H(+). It participates in bacterial outer membrane biogenesis; LPS lipid A biosynthesis. Functionally, condensation of UDP-2,3-diacylglucosamine and 2,3-diacylglucosamine-1-phosphate to form lipid A disaccharide, a precursor of lipid A, a phosphorylated glycolipid that anchors the lipopolysaccharide to the outer membrane of the cell. This is Lipid-A-disaccharide synthase from Rickettsia bellii (strain OSU 85-389).